We begin with the raw amino-acid sequence, 1014 residues long: UvrABC system protein A (1014 aa).

32–39 (GLSGSGKS) lines the ATP pocket. 2 ABC transporter domains span residues 314-592 (WSHG…AESQ) and 612-941 (QDPS…KFLR). ATP is bound at residue 645–652 (GVSGSGKS). The segment at 744 to 770 (CENCAGDGTIKIEMNFLPDVYVPCEVC) adopts a C4-type zinc-finger fold. The span at 976 to 995 (TKTVTGTAAKKATATRTAKT) shows a compositional bias: low complexity. A disordered region spans residues 976 to 1014 (TKTVTGTAAKKATATRTAKTAVKKAAKPAAKKTTRTSKA). Residues 996-1014 (AVKKAAKPAAKKTTRTSKA) are compositionally biased toward basic residues.

It belongs to the ABC transporter superfamily. UvrA family. As to quaternary structure, forms a heterotetramer with UvrB during the search for lesions.

It is found in the cytoplasm. Its function is as follows. The UvrABC repair system catalyzes the recognition and processing of DNA lesions. UvrA is an ATPase and a DNA-binding protein. A damage recognition complex composed of 2 UvrA and 2 UvrB subunits scans DNA for abnormalities. When the presence of a lesion has been verified by UvrB, the UvrA molecules dissociate. The protein is UvrABC system protein A of Streptomyces coelicolor (strain ATCC BAA-471 / A3(2) / M145).